A 210-amino-acid polypeptide reads, in one-letter code: Proteasome subunit beta (210 aa).

The propeptide at M1–G9 is removed in mature form; by autocatalysis. T10 functions as the Nucleophile in the catalytic mechanism.

Belongs to the peptidase T1B family. In terms of assembly, the 20S proteasome core is composed of 14 alpha and 14 beta subunits that assemble into four stacked heptameric rings, resulting in a barrel-shaped structure. The two inner rings, each composed of seven catalytic beta subunits, are sandwiched by two outer rings, each composed of seven alpha subunits. The catalytic chamber with the active sites is on the inside of the barrel. Has a gated structure, the ends of the cylinder being occluded by the N-termini of the alpha-subunits. Is capped at one or both ends by the proteasome regulatory ATPase, PAN.

The protein resides in the cytoplasm. The catalysed reaction is Cleavage of peptide bonds with very broad specificity.. With respect to regulation, the formation of the proteasomal ATPase PAN-20S proteasome complex, via the docking of the C-termini of PAN into the intersubunit pockets in the alpha-rings, triggers opening of the gate for substrate entry. Interconversion between the open-gate and close-gate conformations leads to a dynamic regulation of the 20S proteasome proteolysis activity. In terms of biological role, component of the proteasome core, a large protease complex with broad specificity involved in protein degradation. This Methanosarcina mazei (strain ATCC BAA-159 / DSM 3647 / Goe1 / Go1 / JCM 11833 / OCM 88) (Methanosarcina frisia) protein is Proteasome subunit beta.